Here is a 322-residue protein sequence, read N- to C-terminus: Malate dehydrogenase (322 aa).

Residues 10-15 (GSGQIG) and Asp34 each bind NAD(+). 2 residues coordinate substrate: Arg83 and Arg89. NAD(+) is bound by residues Asn96 and 119–121 (ITN). Substrate-binding residues include Asn121 and Arg152. His176 functions as the Proton acceptor in the catalytic mechanism.

Belongs to the LDH/MDH superfamily. MDH type 3 family.

It carries out the reaction (S)-malate + NAD(+) = oxaloacetate + NADH + H(+). Its function is as follows. Catalyzes the reversible oxidation of malate to oxaloacetate. The sequence is that of Malate dehydrogenase from Bradyrhizobium sp. (strain ORS 278).